Consider the following 175-residue polypeptide: Austinoid biosynthesis cluster protein F (175 aa).

The protein belongs to the trt14 isomerase family. As to quaternary structure, homodimer.

It functions in the pathway secondary metabolite biosynthesis; terpenoid biosynthesis. Its function is as follows. Part of the gene cluster that mediates the biosynthesis of calidodehydroaustin, a fungal meroterpenoid. The first step of the pathway is the synthesis of 3,5-dimethylorsellinic acid by the polyketide synthase ausA. 3,5-dimethylorsellinic acid is then prenylated by the polyprenyl transferase ausN. Further epoxidation by the FAD-dependent monooxygenase ausM and cyclization by the probable terpene cyclase ausL lead to the formation of protoaustinoid A. Protoaustinoid A is then oxidized to spiro-lactone preaustinoid A3 by the combined action of the FAD-binding monooxygenases ausB and ausC, and the dioxygenase ausE. Acid-catalyzed keto-rearrangement and ring contraction of the tetraketide portion of preaustinoid A3 by ausJ lead to the formation of preaustinoid A4. The aldo-keto reductase ausK, with the help of ausH, is involved in the next step by transforming preaustinoid A4 into isoaustinone which is in turn hydroxylated by the P450 monooxygenase ausI to form austinolide. The cytochrome P450 monooxygenase ausG modifies austinolide to austinol. Austinol is further acetylated to austin by the O-acetyltransferase ausP, which spontaneously changes to dehydroaustin. The cytochrome P450 monooxygenase ausR then converts dehydroaustin is into 7-dehydrodehydroaustin. The hydroxylation catalyzed by ausR permits the O-acetyltransferase ausQ to add an additional acetyl group to the molecule, leading to the formation of acetoxydehydroaustin. The short chain dehydrogenase ausT catalyzes the reduction of the double bond present between carbon atoms 1 and 2 to convert 7-dehydrodehydroaustin into 1,2-dihydro-7-hydroxydehydroaustin. AusQ catalyzes not only an acetylation reaction but also the addition of the PKS ausV diketide product to 1,2-dihydro-7-hydroxydehydroaustin, forming precalidodehydroaustin. Finally, the iron/alpha-ketoglutarate-dependent dioxygenase converts precalidodehydroaustin into calidodehydroaustin. The protein is Austinoid biosynthesis cluster protein F of Aspergillus calidoustus.